A 710-amino-acid polypeptide reads, in one-letter code: DNA polymerase epsilon subunit B (710 aa).

Residues 116 to 167 (FLKRPNSPTDTEITTLSQGSATSVVNPDSHSPMMLEEGSPINSDSEPISEHE) form a disordered region. A compositionally biased stretch (polar residues) spans 121-144 (NSPTDTEITTLSQGSATSVVNPDS).

It belongs to the DNA polymerase epsilon subunit B family. As to quaternary structure, heterotetramer. Consists of four subunits: POL2, DPB2, DPB3 and DPB4.

It localises to the nucleus. Its function is as follows. As accessory component of the DNA polymerase epsilon (DNA polymerase II) participates in chromosomal DNA replication. This chain is DNA polymerase epsilon subunit B (DPB2), found in Kluyveromyces lactis (strain ATCC 8585 / CBS 2359 / DSM 70799 / NBRC 1267 / NRRL Y-1140 / WM37) (Yeast).